The sequence spans 185 residues: Elongation factor P (185 aa).

It belongs to the elongation factor P family.

The protein resides in the cytoplasm. The protein operates within protein biosynthesis; polypeptide chain elongation. Involved in peptide bond synthesis. Stimulates efficient translation and peptide-bond synthesis on native or reconstituted 70S ribosomes in vitro. Probably functions indirectly by altering the affinity of the ribosome for aminoacyl-tRNA, thus increasing their reactivity as acceptors for peptidyl transferase. The sequence is that of Elongation factor P from Geobacillus sp. (strain WCH70).